Reading from the N-terminus, the 403-residue chain is Phosphoglycerate kinase (403 aa).

Substrate-binding positions include 21 to 23, R36, 59 to 62, R119, and R159; these read DFN and HLGR. Residues K214, G301, E332, and 359–362 contribute to the ATP site; that span reads GGDS.

This sequence belongs to the phosphoglycerate kinase family. As to quaternary structure, monomer.

It is found in the cytoplasm. The enzyme catalyses (2R)-3-phosphoglycerate + ATP = (2R)-3-phospho-glyceroyl phosphate + ADP. The protein operates within carbohydrate degradation; glycolysis; pyruvate from D-glyceraldehyde 3-phosphate: step 2/5. In Lactobacillus johnsonii (strain CNCM I-12250 / La1 / NCC 533), this protein is Phosphoglycerate kinase.